We begin with the raw amino-acid sequence, 1015 residues long: DExH-box ATP-dependent RNA helicase DExH8 (1015 aa).

Positions I36–V197 constitute a Helicase ATP-binding domain. G49–S56 provides a ligand contact to ATP. Residues D144–H147 carry the DEVH box motif. The 166-residue stretch at L254–H419 folds into the Helicase C-terminal domain. 2 C3H1-type zinc fingers span residues Y727–L753 and Q754–R782.

Belongs to the DExH box helicase family.

It carries out the reaction ATP + H2O = ADP + phosphate + H(+). The polypeptide is DExH-box ATP-dependent RNA helicase DExH8 (Arabidopsis thaliana (Mouse-ear cress)).